The following is a 256-amino-acid chain: Adenylate kinase (256 aa).

Residue 49–54 participates in ATP binding; it reads GAGKGT. The segment at 69 to 98 is NMP; it reads ATGDMLREQVQQKTPLGIEAKKIMDAGGLV. Residues Thr70, Arg75, 96–98, 125–128, and Gln132 contribute to the AMP site; these read GLV and GFPR. An LID region spans residues 166 to 203; the sequence is GRLVHPASGRSYHKEFNPPKKRNVDDVTGEPLIQRSDD. ATP contacts are provided by residues Arg167 and 176–177; that span reads SY. Residues Arg200 and Arg211 each coordinate AMP. Gln239 contacts ATP.

Belongs to the adenylate kinase family. AK2 subfamily. In terms of assembly, monomer.

The protein resides in the cytoplasm. It localises to the cytosol. Its subcellular location is the mitochondrion intermembrane space. It carries out the reaction AMP + ATP = 2 ADP. Its function is as follows. Catalyzes the reversible transfer of the terminal phosphate group between ATP and AMP. Plays an important role in cellular energy homeostasis and in adenine nucleotide metabolism. Adenylate kinase activity is critical for regulation of the phosphate utilization and the AMP de novo biosynthesis pathways. The protein is Adenylate kinase of Laccaria bicolor (strain S238N-H82 / ATCC MYA-4686) (Bicoloured deceiver).